Consider the following 191-residue polypeptide: A-type ATP synthase subunit E 1 (191 aa).

Belongs to the V-ATPase E subunit family. Has multiple subunits with at least A(3), B(3), C, D, E, F, H, I and proteolipid K(x).

The protein localises to the cell membrane. In terms of biological role, component of the A-type ATP synthase that produces ATP from ADP in the presence of a proton gradient across the membrane. In Methanospirillum hungatei JF-1 (strain ATCC 27890 / DSM 864 / NBRC 100397 / JF-1), this protein is A-type ATP synthase subunit E 1.